A 601-amino-acid polypeptide reads, in one-letter code: NADH-quinone oxidoreductase subunit C/D (601 aa).

The NADH dehydrogenase I subunit C stretch occupies residues 1-192 (MIVPDLVADA…PPYSLTEDQE (192 aa)). The segment at 216–601 (DFMFLNLGPN…IDFVMADVDR (386 aa)) is NADH dehydrogenase I subunit D.

This sequence in the N-terminal section; belongs to the complex I 30 kDa subunit family. The protein in the C-terminal section; belongs to the complex I 49 kDa subunit family. In terms of assembly, NDH-1 is composed of 13 different subunits. Subunits NuoB, CD, E, F, and G constitute the peripheral sector of the complex.

The protein resides in the cell inner membrane. The catalysed reaction is a quinone + NADH + 5 H(+)(in) = a quinol + NAD(+) + 4 H(+)(out). Functionally, NDH-1 shuttles electrons from NADH, via FMN and iron-sulfur (Fe-S) centers, to quinones in the respiratory chain. The immediate electron acceptor for the enzyme in this species is believed to be ubiquinone. Couples the redox reaction to proton translocation (for every two electrons transferred, four hydrogen ions are translocated across the cytoplasmic membrane), and thus conserves the redox energy in a proton gradient. This is NADH-quinone oxidoreductase subunit C/D from Gluconacetobacter diazotrophicus (strain ATCC 49037 / DSM 5601 / CCUG 37298 / CIP 103539 / LMG 7603 / PAl5).